A 287-amino-acid chain; its full sequence is MGRCTIADVAMLIRWRVSLMVAGATFFGAMLAVPHVTITHLLASLATFLLAGGCSAINQVQEADLDAVIPRTASRPIPCGRIGHMYGSLMGLALVTVGWMVLCLAGGLTSLLVGIGIVAVYNGLYTPLKRRTSFALLVGAAAGAMPPVVGWLAVGGHPASPMLVVVYTLYLLWQIPHFWLHAARDREAYRKARLPLPLLSLPHERYARLLKVWFHAYAVAVLMVPAFPLLEGVGMRIMVTLCGIALLFAAMLAVRKRRVALHIADAVLCAVMVVLLIDRLAIPVSLF.

Transmembrane regions (helical) follow at residues 19–39, 100–120, 134–154, 162–182, 212–232, 233–253, and 267–287; these read LMVA…VTIT, MVLC…IVAV, FALL…WLAV, MLVV…WLHA, VWFH…LLEG, VGMR…AMLA, and VLCA…VSLF.

It belongs to the UbiA prenyltransferase family. Protoheme IX farnesyltransferase subfamily.

Its subcellular location is the cell inner membrane. It carries out the reaction heme b + (2E,6E)-farnesyl diphosphate + H2O = Fe(II)-heme o + diphosphate. Its pathway is porphyrin-containing compound metabolism; heme O biosynthesis; heme O from protoheme: step 1/1. Functionally, converts heme B (protoheme IX) to heme O by substitution of the vinyl group on carbon 2 of heme B porphyrin ring with a hydroxyethyl farnesyl side group. The protein is Protoheme IX farnesyltransferase of Nitratidesulfovibrio vulgaris (strain DP4) (Desulfovibrio vulgaris).